A 317-amino-acid polypeptide reads, in one-letter code: MNDSTFTLGIVGARGHTGAELIKLVAAHPRLQLAFVSSRERAGQRLADHHPEFQGELRYENLDADAVAAKGVDAVILALPNGLAAPFVAALEAAKPDTVIVDLSADYRFDNAWYYGLPELTRGRYNGQKHISNPGCYATAMQLAIYPLLDLLAGPPQCFGVSGYSGAGTTPSDKNNVELLADNLMPYALTNHVHEREVSVQMGVAVEFMPHVAPHFRGITLTANLWLNRVQTREQIVERFQQAYAGEPLIEVVDEAPWVSRIAGRHGAQVGGFTLAPGGKRVVVVATLDNLLKGAASQAMQNLNLALGIDELTSIPH.

Cys-136 is an active-site residue.

Belongs to the NAGSA dehydrogenase family. Type 1 subfamily.

Its subcellular location is the cytoplasm. It carries out the reaction N-acetyl-L-glutamate 5-semialdehyde + phosphate + NADP(+) = N-acetyl-L-glutamyl 5-phosphate + NADPH + H(+). The protein operates within amino-acid biosynthesis; L-arginine biosynthesis; N(2)-acetyl-L-ornithine from L-glutamate: step 3/4. Its function is as follows. Catalyzes the NADPH-dependent reduction of N-acetyl-5-glutamyl phosphate to yield N-acetyl-L-glutamate 5-semialdehyde. The polypeptide is N-acetyl-gamma-glutamyl-phosphate reductase (Stenotrophomonas maltophilia (strain R551-3)).